The chain runs to 190 residues: Holliday junction branch migration complex subunit RuvA (190 aa).

Positions 1–63 (MIRKINATIE…EWNTSLYIFK (63 aa)) are domain I. Residues 64-138 (DKIERDVFES…NSFSAYSTGA (75 aa)) are domain II. Residues 138–142 (ADTQS) are flexible linker. The interval 143–190 (YGNNNLKEAIEALETLGFQRYEIMKVIGQLDLEDLKTEEIIKECLTRL) is domain III.

Belongs to the RuvA family. Homotetramer. Forms an RuvA(8)-RuvB(12)-Holliday junction (HJ) complex. HJ DNA is sandwiched between 2 RuvA tetramers; dsDNA enters through RuvA and exits via RuvB. An RuvB hexamer assembles on each DNA strand where it exits the tetramer. Each RuvB hexamer is contacted by two RuvA subunits (via domain III) on 2 adjacent RuvB subunits; this complex drives branch migration. In the full resolvosome a probable DNA-RuvA(4)-RuvB(12)-RuvC(2) complex forms which resolves the HJ.

Its subcellular location is the cytoplasm. In terms of biological role, the RuvA-RuvB-RuvC complex processes Holliday junction (HJ) DNA during genetic recombination and DNA repair, while the RuvA-RuvB complex plays an important role in the rescue of blocked DNA replication forks via replication fork reversal (RFR). RuvA specifically binds to HJ cruciform DNA, conferring on it an open structure. The RuvB hexamer acts as an ATP-dependent pump, pulling dsDNA into and through the RuvAB complex. HJ branch migration allows RuvC to scan DNA until it finds its consensus sequence, where it cleaves and resolves the cruciform DNA. In Petrotoga mobilis (strain DSM 10674 / SJ95), this protein is Holliday junction branch migration complex subunit RuvA.